The chain runs to 438 residues: V-type ATP synthase beta chain (438 aa).

Belongs to the ATPase alpha/beta chains family.

Produces ATP from ADP in the presence of a proton gradient across the membrane. The V-type beta chain is a regulatory subunit. This chain is V-type ATP synthase beta chain, found in Chlamydia trachomatis serovar L2b (strain UCH-1/proctitis).